A 1053-amino-acid polypeptide reads, in one-letter code: DNA-directed RNA polymerase subunit beta' (1053 aa).

Residues Cys-60, Cys-62, Cys-75, and Cys-78 each contribute to the Zn(2+) site. Mg(2+) is bound by residues Asp-449, Asp-451, and Asp-453. Residues Cys-818, Cys-892, Cys-899, and Cys-902 each contribute to the Zn(2+) site.

It belongs to the RNA polymerase beta' chain family. As to quaternary structure, the RNAP catalytic core consists of 2 alpha, 1 beta, 1 beta' and 1 omega subunit. When a sigma factor is associated with the core the holoenzyme is formed, which can initiate transcription. It depends on Mg(2+) as a cofactor. Zn(2+) serves as cofactor.

It carries out the reaction RNA(n) + a ribonucleoside 5'-triphosphate = RNA(n+1) + diphosphate. Its function is as follows. DNA-dependent RNA polymerase catalyzes the transcription of DNA into RNA using the four ribonucleoside triphosphates as substrates. In Listeria grayi (Listeria murrayi), this protein is DNA-directed RNA polymerase subunit beta'.